A 491-amino-acid chain; its full sequence is Glutamyl-tRNA(Gln) amidotransferase subunit A (491 aa).

Residues K78 and S158 each act as charge relay system in the active site. S182 acts as the Acyl-ester intermediate in catalysis.

The protein belongs to the amidase family. GatA subfamily. In terms of assembly, heterotrimer of A, B and C subunits.

It carries out the reaction L-glutamyl-tRNA(Gln) + L-glutamine + ATP + H2O = L-glutaminyl-tRNA(Gln) + L-glutamate + ADP + phosphate + H(+). In terms of biological role, allows the formation of correctly charged Gln-tRNA(Gln) through the transamidation of misacylated Glu-tRNA(Gln) in organisms which lack glutaminyl-tRNA synthetase. The reaction takes place in the presence of glutamine and ATP through an activated gamma-phospho-Glu-tRNA(Gln). The chain is Glutamyl-tRNA(Gln) amidotransferase subunit A from Bradyrhizobium sp. (strain BTAi1 / ATCC BAA-1182).